The primary structure comprises 509 residues: MVGSYVLWLALASCILTLASPEQQGNRNLINTRSYDPCQNYTLLDEPSRSTENTEGSQVCDKDKHGWYRFVGDGGVRMPETCVPMYRCQTDAPLWLNGTHPTLAEGIVNRTACAHWSGNCCLWKTVVQVKACPGEFHVYRLEGTPKCSLRYCTDASTATDKCKNLCRPEEACSFLNGTWDCFCRSDLNSSDVHSLQPRLNCGAKEIQVSLDKCQLGGLGFGDEVIAYLRDWNCSNMMQREERNWISVTSPTQARACGNILERNGTHAIYKNTLSLANEFIIRDTILNINFQCAYPLDMKVSLQTALHPIVSSLNISVDGEGEFTVRMALFQDQSYISPYEGAAAVLAVESMLYVGAILEKGDTSRFNLLLRNCYATPTKDKTDPVKYFIIRNSCPNQYDSTIHVEENGVSSESRFSVQMFMFAGNYDLVFLHCEIHLCDSLNEQCQPCCSRSQQRSEIVALNPARVLDLGPITRRSSASVDITDGTPSTAGFLLAWPMLLLPILLAELF.

Residues 1 to 21 (MVGSYVLWLALASCILTLASP) form the signal peptide. The interval 36 to 56 (DPCQNYTLLDEPSRSTENTEG) is D10C. 10 cysteine pairs are disulfide-bonded: Cys-38/Cys-132, Cys-60/Cys-147, Cys-82/Cys-120, Cys-88/Cys-152, Cys-113/Cys-121, Cys-162/Cys-172, Cys-166/Cys-181, Cys-183/Cys-213, Cys-201/Cys-292, and Cys-233/Cys-256. Residues Asn-40, Asn-97, and Asn-109 are each glycosylated (N-linked (GlcNAc...) asparagine). The region spanning 158-202 (ATDKCKNLCRPEEACSFLNGTWDCFCRSDLNSSDVHSLQPRLNCG) is the EGF-like domain. N-linked (GlcNAc...) asparagine glycans are attached at residues Asn-176, Asn-188, and Asn-232. Residues 200 to 293 (NCGAKEIQVS…TILNINFQCA (94 aa)) form a ZP-N region. The ZP domain maps to 200-456 (NCGAKEIQVS…PCCSRSQQRS (257 aa)). Asn-263 and Asn-314 each carry an N-linked (GlcNAc...) asparagine glycan. A flexible ZP-N/ZP-C linker region spans residues 294-317 (YPLDMKVSLQTALHPIVSSLNISV). The segment at 318 to 329 (DGEGEFTVRMAL) is internal hydrophobic patch (IHP). The segment at 318–456 (DGEGEFTVRM…PCCSRSQQRS (139 aa)) is ZP-C. 3 disulfides stabilise this stretch: Cys-373–Cys-433, Cys-394–Cys-449, and Cys-438–Cys-445. The segment at 463-471 (PARVLDLGP) is external hydrophobic patch (EHP). Asp-484 is lipidated: GPI-anchor amidated aspartate. The propeptide at 485 to 509 (GTPSTAGFLLAWPMLLLPILLAELF) is removed in mature form.

In terms of assembly, interacts with SYCN. Interacts with bacterial adhesin fimH. In terms of processing, N-glycosylated. Expressed in pancreas.

The protein localises to the zymogen granule membrane. It is found in the secreted. The protein resides in the cell membrane. It localises to the apical cell membrane. Its subcellular location is the membrane raft. The protein localises to the endosome. Its function is as follows. Functions as an intestinal M-cell transcytotic receptor specific of type-I-piliated bacteria that participates in the mucosal immune response toward these bacteria. At the apical membrane of M-cells it binds fimH, a protein of the bacteria type I pilus tip. Internalizes bound bacteria, like E.coli and S.typhimurium, from the lumen of the intestine and delivers them, through M-cells, to the underlying organized lymphoid follicles where they are captured by antigen-presenting dendritic cells to elicit a mucosal immune response. This chain is Pancreatic secretory granule membrane major glycoprotein GP2, found in Canis lupus familiaris (Dog).